A 586-amino-acid chain; its full sequence is Aspartate--tRNA ligase (586 aa).

E171 is an L-aspartate binding site. The tract at residues 195 to 198 is aspartate; that stretch reads QLFK. Residue R217 coordinates L-aspartate. Residues 217–219 and Q226 contribute to the ATP site; that span reads RDE. H448 contacts L-aspartate. Residue E482 participates in ATP binding. Position 489 (R489) interacts with L-aspartate. 534–537 is a binding site for ATP; the sequence is GLDR.

The protein belongs to the class-II aminoacyl-tRNA synthetase family. Type 1 subfamily. Homodimer.

Its subcellular location is the cytoplasm. The catalysed reaction is tRNA(Asp) + L-aspartate + ATP = L-aspartyl-tRNA(Asp) + AMP + diphosphate. Catalyzes the attachment of L-aspartate to tRNA(Asp) in a two-step reaction: L-aspartate is first activated by ATP to form Asp-AMP and then transferred to the acceptor end of tRNA(Asp). In Buchnera aphidicola subsp. Acyrthosiphon pisum (strain 5A), this protein is Aspartate--tRNA ligase.